The primary structure comprises 68 residues: MKLNEVKEFVKELRGLSQEELAKRENELKKELFELRFQAATGQLEQTARLKEVKKQIARIKTVQSEAK.

Belongs to the universal ribosomal protein uL29 family.

The polypeptide is Large ribosomal subunit protein uL29 (Streptococcus pneumoniae (strain JJA)).